The chain runs to 318 residues: tRNA uridine(34) hydroxylase (318 aa).

The Rhodanese domain occupies 123-217; that stretch reads EDDDTVIIDA…YGKDPETKGE (95 aa). C177 (cysteine persulfide intermediate) is an active-site residue.

The protein belongs to the TrhO family.

It carries out the reaction uridine(34) in tRNA + AH2 + O2 = 5-hydroxyuridine(34) in tRNA + A + H2O. Functionally, catalyzes oxygen-dependent 5-hydroxyuridine (ho5U) modification at position 34 in tRNAs. This is tRNA uridine(34) hydroxylase from Staphylococcus aureus (strain USA300).